The sequence spans 476 residues: Glycogen synthase (476 aa).

Lys-15 provides a ligand contact to ADP-alpha-D-glucose.

This sequence belongs to the glycosyltransferase 1 family. Bacterial/plant glycogen synthase subfamily.

The catalysed reaction is [(1-&gt;4)-alpha-D-glucosyl](n) + ADP-alpha-D-glucose = [(1-&gt;4)-alpha-D-glucosyl](n+1) + ADP + H(+). Its pathway is glycan biosynthesis; glycogen biosynthesis. In terms of biological role, synthesizes alpha-1,4-glucan chains using ADP-glucose. This Bacillus cereus (strain ATCC 14579 / DSM 31 / CCUG 7414 / JCM 2152 / NBRC 15305 / NCIMB 9373 / NCTC 2599 / NRRL B-3711) protein is Glycogen synthase.